The following is a 244-amino-acid chain: Securin-like protein (244 aa).

Residues 31–53 are disordered; that stretch reads ELEKTPSRGGLGLVVNSSKTPGG.

In terms of assembly, forms a complex (via C-terminus) with separase sep-1. Interaction with ify-1 stabilizes sep-1. Also maintains the complex in the cytoplasm during interphase and recruits it to chromosomes during the first meiotic division. Interacts with E3 ubiquitin-protein ligase etc-1. In terms of processing, ubiquitinated by etc-1 likely at the onset of anaphase, resulting in its degradation. As to expression, expressed in germ cells including oocytes.

The protein localises to the cytoplasm. The protein resides in the chromosome. It is found in the cytoskeleton. Its subcellular location is the spindle. In terms of biological role, acts as a chaperone and as an inhibitor for separase sep-1. Plays an essential role in maintaining chromosome cohesion prior to meiotic and mitotic anaphase, in cytokinesis and in organizing the spindle and the centrosome. Ubiquitination-dependent degradation at the onset of anaphase is likely to activate sep-1 resulting in the proteolysis of the cohesin complex and the subsequent segregation of the chromosomes. Also required for cortical granule exocytosis. In Caenorhabditis elegans, this protein is Securin-like protein.